The chain runs to 112 residues: Nitrogen regulatory protein P-II (112 aa).

Tyr-51 is modified (O-UMP-tyrosine).

Belongs to the P(II) protein family. In terms of assembly, homotrimer.

Its function is as follows. In nitrogen-limiting conditions, when the ratio of Gln to 2-ketoglutarate decreases, P-II is uridylylated to P-II-UMP. P-II-UMP allows the deadenylation of glutamine synthetase (GS), thus activating the enzyme. Conversely, in nitrogen excess P-II is deuridylated and promotes the adenylation of GS. P-II indirectly controls the transcription of the GS gene (glnA). P-II prevents NR-II-catalyzed conversion of NR-I to NR-I-phosphate, the transcriptional activator of glnA. When P-II is uridylylated to P-II-UMP, these events are reversed. This is Nitrogen regulatory protein P-II (glnB) from Azospirillum brasilense.